The primary structure comprises 892 residues: Putative ubiquitin carboxyl-terminal hydrolase 11 (892 aa).

The region spanning 17-132 (YTPEEERRIV…GGPPVPRKLI (116 aa)) is the DUSP domain. The tract at residues 69–89 (EPSEVTRPGPIDNHDIIDSES) is disordered. Positions 301–880 (GGLQNLGNTC…AAYVLFYQRV (580 aa)) constitute a USP domain. The active-site Nucleophile is the cysteine 310. The segment at 636–660 (NSGNENGHVPDESSRSILSRDTETE) is disordered. Residues 643–657 (HVPDESSRSILSRDT) show a composition bias toward basic and acidic residues. Catalysis depends on histidine 838, which acts as the Proton acceptor.

The protein belongs to the peptidase C19 family.

It carries out the reaction Thiol-dependent hydrolysis of ester, thioester, amide, peptide and isopeptide bonds formed by the C-terminal Gly of ubiquitin (a 76-residue protein attached to proteins as an intracellular targeting signal).. Functionally, recognizes and hydrolyzes the peptide bond at the C-terminal Gly of ubiquitin. Involved in the processing of poly-ubiquitin precursors as well as that of ubiquitinated proteins. The sequence is that of Putative ubiquitin carboxyl-terminal hydrolase 11 (UBP11) from Arabidopsis thaliana (Mouse-ear cress).